The primary structure comprises 737 residues: Transcription activator MSS11 (737 aa).

The tract at residues 1–23 (MDNTTNINTNERSSNTDFSSAPN) is disordered. Residues 51-83 (SKQLLYAHIYNYLIKNNYWNSAAKFLSEADLPL) enclose the LisH domain. Disordered regions lie at residues 191–220 (TQNSFPVSEESFRPNGDGSNFNLNDPTNRN), 268–347 (LQSP…PTNQ), 413–439 (GNQNYQSNTRNNTAEETTPTNDNNANG), and 572–660 (KTNT…TKES). Residues 207–220 (DGSNFNLNDPTNRN) show a composition bias toward polar residues. Residues 269–314 (QSPAQPQQSSQQQIQQPQRQPQHQQQQQQQQQQQQQQQQQQQQQQQ) are compositionally biased toward low complexity. Composition is skewed to polar residues over residues 330-347 (SENSHSTGLMPSVPPTNQ), 421-439 (TRNNTAEETTPTNDNNANG), and 572-585 (KTNTSVPQNDSTSV). A compositionally biased stretch (low complexity) spans 590–643 (NNNNNNNNNNNNNNNSNNSNNNNNNNNSNNTPTVSQPSSKRTSSSSTTPNITTT). The segment covering 646–655 (PKRKQRVGKT) has biased composition (basic residues).

This sequence belongs to the MSS11 family. Interacts with FLO8, STE12 and TEC1.

The protein resides in the cytoplasm. Its subcellular location is the nucleus. Transcription factor that regulates pseudohyphal differentiation, invasive growth, floculation, adhesion and starch metabolism in response to nutrient availability. This chain is Transcription activator MSS11 (MSS11), found in Saccharomyces cerevisiae (strain YJM789) (Baker's yeast).